A 22-amino-acid polypeptide reads, in one-letter code: Odorant-binding protein 1 (22 aa).

The protein belongs to the calycin superfamily. Lipocalin family. In terms of assembly, homodimer. The N-terminus is blocked.

Its function is as follows. Binds the chemical odorant, 2-isobutyl-3-methoxypyrazine. The polypeptide is Odorant-binding protein 1 (Oryctolagus cuniculus (Rabbit)).